The following is a 342-amino-acid chain: Platelet-activating factor receptor (342 aa).

The Extracellular portion of the chain corresponds to methionine 1–threonine 16. An N-linked (GlcNAc...) asparagine glycan is attached at asparagine 4. A helical transmembrane segment spans residues leucine 17–tryptophan 38. At valine 39–isoleucine 54 the chain is on the cytoplasmic side. The chain crosses the membrane as a helical span at residues phenylalanine 55–isoleucine 74. Over valine 75–asparagine 91 the chain is Extracellular. A disulfide bridge connects residues cysteine 90 and cysteine 173. Residues leucine 92–tyrosine 113 form a helical membrane-spanning segment. At asparagine 114–arginine 133 the chain is on the cytoplasmic side. Residues glycine 134–leucine 155 form a helical membrane-spanning segment. Topologically, residues aspartate 156–valine 184 are extracellular. N-linked (GlcNAc...) asparagine glycosylation is found at asparagine 163 and asparagine 169. The chain crosses the membrane as a helical span at residues leucine 185–cysteine 205. The Cytoplasmic segment spans residues asparagine 206–methionine 233. A helical transmembrane segment spans residues valine 234 to proline 254. The Extracellular portion of the chain corresponds to tryptophan 255–glutamine 276. A helical membrane pass occupies residues valine 277–leucine 296. At threonine 297 to tyrosine 342 the chain is on the cytoplasmic side.

This sequence belongs to the G-protein coupled receptor 1 family. As to quaternary structure, interacts with ARRB1. As to expression, found in oviductal epithelial and stroma cells. Levels in the oviduct are raised at days 2-4 of both pregnancy and of the estrus cycle. In the endometrium, localization is predominantly to the apical borders of glandular and luminal epithelial cells. Expressed at lower levels in endometrial stromal cells. Levels in the endometrium are increased at day 20 of pregnancy (at protein level).

Its subcellular location is the cell membrane. Its function is as follows. Receptor for platelet activating factor, a chemotactic phospholipid mediator that possesses potent inflammatory, smooth-muscle contractile and hypotensive activity. Seems to mediate its action via a G protein that activates a phosphatidylinositol-calcium second messenger system. May be involved in the morphological and physical modifications of the oviduct and uterus during the estrus cycle and early pregnancy. In Bos taurus (Bovine), this protein is Platelet-activating factor receptor.